The following is a 290-amino-acid chain: Pyridoxal kinase PdxY (290 aa).

Residues Ser-12 and 47–48 contribute to the substrate site; that span reads TQ. Residues Asp-114, Glu-151, Lys-184, and 211 to 214 contribute to the ATP site; that span reads RPLL. Residue Asp-225 participates in substrate binding.

It belongs to the pyridoxine kinase family. PdxY subfamily. In terms of assembly, homodimer. Requires Mg(2+) as cofactor.

It catalyses the reaction pyridoxal + ATP = pyridoxal 5'-phosphate + ADP + H(+). Its pathway is cofactor metabolism; pyridoxal 5'-phosphate salvage; pyridoxal 5'-phosphate from pyridoxal: step 1/1. In terms of biological role, pyridoxal kinase involved in the salvage pathway of pyridoxal 5'-phosphate (PLP). Catalyzes the phosphorylation of pyridoxal to PLP. This Pseudomonas fluorescens (strain SBW25) protein is Pyridoxal kinase PdxY.